The primary structure comprises 365 residues: GDSL esterase/lipase At3g62280 (365 aa).

The first 25 residues, 1 to 25 (MDYTVSSLQCFFLVLCLSLLVCSNS), serve as a signal peptide directing secretion. The active-site Nucleophile is the Ser-43. N-linked (GlcNAc...) asparagine glycosylation is found at Asn-137, Asn-178, and Asn-231. Catalysis depends on residues Asp-333 and His-336.

This sequence belongs to the 'GDSL' lipolytic enzyme family.

Its subcellular location is the secreted. The sequence is that of GDSL esterase/lipase At3g62280 from Arabidopsis thaliana (Mouse-ear cress).